A 173-amino-acid polypeptide reads, in one-letter code: Photosystem I assembly protein Ycf3 (173 aa).

TPR repeat units follow at residues 35 to 68 (AYIY…EENA), 72 to 105 (GETL…NPKQ), and 120 to 153 (GRAL…YPGG).

It belongs to the Ycf3 family.

It is found in the cellular thylakoid membrane. Its function is as follows. Essential for the assembly of the photosystem I (PSI) complex. May act as a chaperone-like factor to guide the assembly of the PSI subunits. In Prochlorococcus marinus (strain SARG / CCMP1375 / SS120), this protein is Photosystem I assembly protein Ycf3.